Consider the following 528-residue polypeptide: RNA polymerase sigma factor SigA (528 aa).

The span at Met1 to Thr10 shows a compositional bias: polar residues. Residues Met1 to Ala211 form a disordered region. Composition is skewed to low complexity over residues Thr19–Thr31, Ala38–Arg56, and Ala80–Arg92. A compositionally biased stretch (basic and acidic residues) spans Ala100–Ala109. Residues Thr110–Ala173 are compositionally biased toward acidic residues. The tract at residues Leu295–Thr365 is sigma-70 factor domain-2. An Interaction with polymerase core subunit RpoC motif is present at residues Asp319 to Gln322. Residues Glu374–Ala450 form a sigma-70 factor domain-3 region. Residues Val463–His516 are sigma-70 factor domain-4. Positions Leu489–Ser508 form a DNA-binding region, H-T-H motif.

This sequence belongs to the sigma-70 factor family. RpoD/SigA subfamily. Interacts transiently with the RNA polymerase catalytic core.

The protein localises to the cytoplasm. In terms of biological role, sigma factors are initiation factors that promote the attachment of RNA polymerase to specific initiation sites and are then released. This sigma factor is the primary sigma factor during exponential growth. The protein is RNA polymerase sigma factor SigA of Mycobacterium bovis (strain ATCC BAA-935 / AF2122/97).